A 299-amino-acid chain; its full sequence is Putative peptidyl-prolyl cis-trans isomerase HP_0175 (299 aa).

Residues 1–21 form the signal peptide; that stretch reads MKKNILNLALVGALSTSFLMA. In terms of domain architecture, PpiC spans 154–253; it reads KQEAHARHIL…FGYHIIYLIS (100 aa).

It carries out the reaction [protein]-peptidylproline (omega=180) = [protein]-peptidylproline (omega=0). The chain is Putative peptidyl-prolyl cis-trans isomerase HP_0175 from Helicobacter pylori (strain ATCC 700392 / 26695) (Campylobacter pylori).